We begin with the raw amino-acid sequence, 254 residues long: D-aminoacyl-tRNA deacylase (254 aa).

The disordered stretch occupies residues 61 to 85 (KPTLTVHTPGNLTEDNSRGGNSEEI). A compositionally biased stretch (polar residues) spans 65 to 84 (TVHTPGNLTEDNSRGGNSEE).

This sequence belongs to the DtdA deacylase family. Monomer. Requires Zn(2+) as cofactor.

The enzyme catalyses a D-aminoacyl-tRNA + H2O = a tRNA + a D-alpha-amino acid + H(+). It catalyses the reaction glycyl-tRNA(Ala) + H2O = tRNA(Ala) + glycine + H(+). Its function is as follows. D-aminoacyl-tRNA deacylase with broad substrate specificity. By recycling D-aminoacyl-tRNA to D-amino acids and free tRNA molecules, this enzyme counteracts the toxicity associated with the formation of D-aminoacyl-tRNA entities in vivo. This is D-aminoacyl-tRNA deacylase from Methanococcus maripaludis (strain C5 / ATCC BAA-1333).